The sequence spans 210 residues: Ribosomal RNA large subunit methyltransferase E (210 aa).

5 residues coordinate S-adenosyl-L-methionine: Gly-61, Trp-63, Asp-81, Asp-97, and Asp-122. Lys-162 functions as the Proton acceptor in the catalytic mechanism. Residues 187-196 (KPEASRKRSP) are compositionally biased toward basic and acidic residues. Positions 187 to 210 (KPEASRKRSPEVYALGQGKRAHMK) are disordered.

Belongs to the class I-like SAM-binding methyltransferase superfamily. RNA methyltransferase RlmE family.

It localises to the cytoplasm. It carries out the reaction uridine(2552) in 23S rRNA + S-adenosyl-L-methionine = 2'-O-methyluridine(2552) in 23S rRNA + S-adenosyl-L-homocysteine + H(+). Functionally, specifically methylates the uridine in position 2552 of 23S rRNA at the 2'-O position of the ribose in the fully assembled 50S ribosomal subunit. This is Ribosomal RNA large subunit methyltransferase E from Stenotrophomonas maltophilia (strain K279a).